Reading from the N-terminus, the 396-residue chain is 1-deoxy-D-xylulose 5-phosphate reductoisomerase (396 aa).

5 residues coordinate NADPH: T13, G14, S15, I16, and N127. Residue K128 participates in 1-deoxy-D-xylulose 5-phosphate binding. Residue E129 coordinates NADPH. D153 is a binding site for Mn(2+). 1-deoxy-D-xylulose 5-phosphate contacts are provided by S154, E155, S184, and H207. E155 contacts Mn(2+). G213 is an NADPH binding site. Residues S220, N225, K226, and E229 each coordinate 1-deoxy-D-xylulose 5-phosphate. Residue E229 coordinates Mn(2+).

The protein belongs to the DXR family. Requires Mg(2+) as cofactor. Mn(2+) is required as a cofactor.

It catalyses the reaction 2-C-methyl-D-erythritol 4-phosphate + NADP(+) = 1-deoxy-D-xylulose 5-phosphate + NADPH + H(+). The protein operates within isoprenoid biosynthesis; isopentenyl diphosphate biosynthesis via DXP pathway; isopentenyl diphosphate from 1-deoxy-D-xylulose 5-phosphate: step 1/6. Functionally, catalyzes the NADPH-dependent rearrangement and reduction of 1-deoxy-D-xylulose-5-phosphate (DXP) to 2-C-methyl-D-erythritol 4-phosphate (MEP). The chain is 1-deoxy-D-xylulose 5-phosphate reductoisomerase from Pseudomonas fluorescens (strain Pf0-1).